A 246-amino-acid chain; its full sequence is Uridylate kinase (246 aa).

18 to 21 (KLSG) is a binding site for ATP. G60 is a binding site for UMP. ATP contacts are provided by G61 and R65. UMP is bound by residues D80 and 141–148 (TGNPFFTT). Residues T168, Y174, and D177 each coordinate ATP.

This sequence belongs to the UMP kinase family. As to quaternary structure, homohexamer.

It is found in the cytoplasm. It carries out the reaction UMP + ATP = UDP + ADP. The protein operates within pyrimidine metabolism; CTP biosynthesis via de novo pathway; UDP from UMP (UMPK route): step 1/1. Its activity is regulated as follows. Inhibited by UTP. Catalyzes the reversible phosphorylation of UMP to UDP. This Pseudomonas syringae pv. syringae (strain B728a) protein is Uridylate kinase.